The primary structure comprises 450 residues: Magnesium transporter MgtE (450 aa).

Over 1–283 the chain is Cytoplasmic; the sequence is MEEKLAVSLQ…SEAGPVALWL (283 aa). Mg(2+)-binding residues include glutamate 59, aspartate 91, aspartate 95, and glycine 136. CBS domains lie at 138–200 and 202–258; these read MTPE…RVAE and MNPK…EATE. ATP contacts are provided by tyrosine 170, serine 185, arginine 187, aspartate 188, and valine 207. Residues glutamate 216, alanine 223, aspartate 226, aspartate 247, aspartate 250, glutamate 255, glutamate 258, and aspartate 259 each coordinate Mg(2+). Glutamate 275 is a binding site for Ca(2+). Mn(2+) is bound by residues glutamate 275, glutamine 304, glutamate 307, and glutamate 311. The helical transmembrane segment at 284 to 306 threads the bilayer; sequence ARVRWLVILILTGMVTSSILQGF. Topologically, residues 307-315 are periplasmic; it reads ESVLEAVTA. A Ca(2+)-binding site is contributed by glutamate 311. A helical membrane pass occupies residues 316 to 337; sequence LAFYVPVLLGTGGNTGNQSATL. Over 338-351 the chain is Cytoplasmic; that stretch reads IIRALATRDLDLRD. A helical transmembrane segment spans residues 352-381; that stretch reads WRRVFLKEMGVGLLLGLTLSFLLVGKVYWD. At 382–385 the chain is on the periplasmic side; that stretch reads GHPL. Histidine 383 provides a ligand contact to Mn(2+). A helical membrane pass occupies residues 386 to 409; it reads LLPVVGVSLVLIVFFANLVGAMLP. Over 410–420 the chain is Cytoplasmic; sequence FLLRRLGVDPA. Mg(2+)-binding residues include aspartate 418, alanine 428, and aspartate 432. A helical membrane pass occupies residues 421 to 443; that stretch reads LVSNPLVATLSDVTGLLIYLSVA. Over 444-450 the chain is Periplasmic; the sequence is RLLLEAV.

It belongs to the SLC41A transporter family. Homodimer.

Its subcellular location is the cell inner membrane. It catalyses the reaction Mg(2+)(in) = Mg(2+)(out). With respect to regulation, the channel activity is regulated via the N-terminal cytoplasmic region, which acts as a Mg(2+) sensor to regulate the gating of the ion-conducting pore in response to the intracellular magnesium concentration. Under high-intracellular magnesium conditions, binding of magnesium to the N-terminal cytoplasmic domain stabilizes the closed conformation of the channel. Under low-intracellular magnesium conditions, the channel is in equilibrium between the open and closed states. A cation-binding site within the membrane (M1) strictly recognizes the size and geometry of the Mg(2+) hydration shells, which may be important for the selective transport of Mg(2+) over other cations. Cation-binding sites on the periplasmic side (M2 and M3) regulate channel opening and prevent conduction of near-cognate cations. Binding of Mn(2+) to the periplasmic sites strongly inhibits the Mg(2+) transport activity. In addition, activity is regulated by ATP, which binds to MgtE and modulates its Mg(2+)-dependent channel gating. ATP binding enhances the intracellular domain affinity for Mg(2+) within physiological concentrations of this divalent cation, enabling MgtE to function as an in vivo Mg(2+) sensor. ATP dissociation from MgtE upregulates Mg(2+) influx at both high and low intracellular Mg(2+) concentrations. Its function is as follows. Highly selective magnesium channel that plays an important role in Mg(2+) homeostasis. Functions as a Mg(2+)-dependent gating channel. Exhibits low activity with cobalt, suggesting that it might also be involved in the uptake of Co(2+) as a micronutrient. Also exhibits low activity with Ca(2+), but it shows almost no activity with Mn(2+). This Thermus thermophilus (strain ATCC 27634 / DSM 579 / HB8) protein is Magnesium transporter MgtE.